The chain runs to 539 residues: MFVALGAQIYRQYFGRRGMAMANNSSVANKVCLIVIDGWGVSEDPYGNAILNAQTPVMDKLCSGNWAQIEAHGLHVGLPEGLMGNSEVGHLNIGAGRVIYQDIVRINLAVKNNKFVTNESLVDACDRAKNGNGRLHLAGLVSDGGVHSHIDHMFALVKAIKELGVPELYLHFYGDGRDTSPNSGVGFLEQTLEFLEKTTGYGKLATVVGRYYAMDRDNRWERINVAYEAMIGGVGETSDEAGVVEVVRKRYAADETDEFLKPIILQGEKGRVQNDDTIIFFDYRADRMREISAAMGMDRYKDCNSKLAHPSNLQVYGMTQYKAEFPFKSLFPPASNKNVLAEWLAEQKVSQFHCAETEKYAHVTFFFNGGLEKQFEGEERCLVPSPKVATYDLQPEMSAAGVADKMIEQLEAGTHPFIMCNFAPPDMVGHTGVYEAAVKACEATDIAIGRIYEATQKHGYSLMVTADHGNAEKMKAPDGGKHTAHTCYRVPLTLSHPGFKFVDPADRHPALCDVAPTVLAIMGLPQPAEMTGVSIVQKI.

Residues Asp37 and Ser86 each contribute to the Mn(2+) site. The active site involves Ser86. Substrate contacts are provided by residues His147, 177-178 (RD), Arg210, Arg216, 284-287 (RADR), and Lys359. 5 residues coordinate Mn(2+): Asp426, His430, Asp467, His468, and His485.

This sequence belongs to the BPG-independent phosphoglycerate mutase family. Mg(2+) is required as a cofactor. The cofactor is Mn(2+). In terms of tissue distribution, expressed ubiquitously. High expression levels in the nerve ring region, intestine and body wall muscles.

It catalyses the reaction (2R)-2-phosphoglycerate = (2R)-3-phosphoglycerate. It functions in the pathway carbohydrate degradation; glycolysis; pyruvate from D-glyceraldehyde 3-phosphate: step 3/5. Its activity is regulated as follows. Activity is not affected by 2,3-bisphosphoglycerate. Functionally, catalyzes the interconversion of 2-phosphoglycerate and 3-phosphoglycerate. In Caenorhabditis elegans, this protein is 2,3-bisphosphoglycerate-independent phosphoglycerate mutase.